A 266-amino-acid chain; its full sequence is Tryptophan synthase alpha chain (266 aa).

Residues Glu49 and Asp60 each act as proton acceptor in the active site.

The protein belongs to the TrpA family. In terms of assembly, tetramer of two alpha and two beta chains.

It carries out the reaction (1S,2R)-1-C-(indol-3-yl)glycerol 3-phosphate + L-serine = D-glyceraldehyde 3-phosphate + L-tryptophan + H2O. The protein operates within amino-acid biosynthesis; L-tryptophan biosynthesis; L-tryptophan from chorismate: step 5/5. Its function is as follows. The alpha subunit is responsible for the aldol cleavage of indoleglycerol phosphate to indole and glyceraldehyde 3-phosphate. The sequence is that of Tryptophan synthase alpha chain from Shewanella amazonensis (strain ATCC BAA-1098 / SB2B).